Consider the following 87-residue polypeptide: uncharacterized protein (87 aa).

It to A.fulgidus AF_0255 and AF_1348.

This is an uncharacterized protein from Archaeoglobus fulgidus (strain ATCC 49558 / DSM 4304 / JCM 9628 / NBRC 100126 / VC-16).